A 443-amino-acid chain; its full sequence is Putative metabolite transport protein YaaU (443 aa).

Over M1–R18 the chain is Cytoplasmic. A helical transmembrane segment spans residues I19–V39. At A40–D53 the chain is on the periplasmic side. Residues W54–G74 form a helical membrane-spanning segment. The Cytoplasmic segment spans residues Y75–K84. Residues M85–S105 traverse the membrane as a helical segment. The Periplasmic segment spans residues P106 to R113. A helical transmembrane segment spans residues V114–F134. Residues S135–S145 are Cytoplasmic-facing. The chain crosses the membrane as a helical span at residues F146–Y166. The Periplasmic segment spans residues D167–R173. Residues W174 to P194 form a helical membrane-spanning segment. Residues E195–H241 lie on the Cytoplasmic side of the membrane. Residues F242–I262 form a helical membrane-spanning segment. At Y263–A282 the chain is on the periplasmic side. A helical membrane pass occupies residues L283–L303. Topologically, residues N304–R309 are cytoplasmic. Residues P310–I329 traverse the membrane as a helical segment. Residues P330–I334 are Periplasmic-facing. The helical transmembrane segment at W335–L357 threads the bilayer. Residues Y358–G373 lie on the Cytoplasmic side of the membrane. A helical membrane pass occupies residues V374–I394. The Periplasmic segment spans residues N395–N401. A helical membrane pass occupies residues T402–P422. Topologically, residues E423 to G443 are cytoplasmic.

It belongs to the major facilitator superfamily. Sugar transporter (TC 2.A.1.1) family.

The protein localises to the cell inner membrane. This is Putative metabolite transport protein YaaU (yaaU) from Escherichia coli (strain K12).